A 247-amino-acid chain; its full sequence is Small ribosomal subunit protein uS3 (247 aa).

In terms of domain architecture, KH type-2 spans 18–87; the sequence is IDEYLAKRFY…NPQITVRRVE (70 aa). The interval 226–247 is disordered; sequence QQGEVVGEAPNTPLEEQGQKQG.

The protein belongs to the universal ribosomal protein uS3 family. In terms of assembly, part of the 30S ribosomal subunit.

Binds the lower part of the 30S subunit head. This is Small ribosomal subunit protein uS3 from Hyperthermus butylicus (strain DSM 5456 / JCM 9403 / PLM1-5).